The chain runs to 142 residues: MKTFTAKPESVQRDWYVVDATGKTLGRLATELARRLRGKHKAEYTPHVDTGDYIIVLNAEKVAVTGNKRSDKIYYHHTGHIGGIKQATFEEMIARRPERVIEIAVKGMLPKGPLGRAMYRKLKVYAGNEHNHAAQQPQVLDI.

It belongs to the universal ribosomal protein uL13 family. Part of the 50S ribosomal subunit.

Functionally, this protein is one of the early assembly proteins of the 50S ribosomal subunit, although it is not seen to bind rRNA by itself. It is important during the early stages of 50S assembly. The chain is Large ribosomal subunit protein uL13 from Erwinia tasmaniensis (strain DSM 17950 / CFBP 7177 / CIP 109463 / NCPPB 4357 / Et1/99).